The primary structure comprises 251 residues: Protection of telomeres homolog 2 (251 aa).

A disordered region spans residues 221–251 (ELDNWPEGPPKTFAEAIARANNSRRPRDPPQ).

Belongs to the telombin family.

Its subcellular location is the nucleus. The protein resides in the chromosome. It is found in the telomere. In terms of biological role, telomeric DNA-binding protein, which binds to two or more single-stranded G-rich repeat sequences (G-strand), with high specificity to the 5'-TTAGGC-3' sequence. In addition, repeat sequence binding requires a 3' single-stranded telomeric overhang. Acts redundantly with pot-1 to negatively regulate telomerase-mediated telomere extension. Also regulates telomere length by the telomerase-independent telomere maintenance pathway called ALT (alternative lengthening of telomeres). Does not appear to have a role in anchoring telomeres to the nuclear envelope. The protein is Protection of telomeres homolog 2 of Caenorhabditis elegans.